Here is a 239-residue protein sequence, read N- to C-terminus: Small ribosomal subunit protein uS2c (239 aa).

This sequence belongs to the universal ribosomal protein uS2 family.

It is found in the plastid. Its subcellular location is the organellar chromatophore. The sequence is that of Small ribosomal subunit protein uS2c (rps2) from Paulinella chromatophora.